The chain runs to 468 residues: Glutamate--tRNA ligase (468 aa).

Residues 11–21 (PSPTGFIHLGN) carry the 'HIGH' region motif. The short motif at 243 to 247 (KMSKR) is the 'KMSKS' region element. Lys-246 serves as a coordination point for ATP.

The protein belongs to the class-I aminoacyl-tRNA synthetase family. Glutamate--tRNA ligase type 1 subfamily. Monomer.

It localises to the cytoplasm. It carries out the reaction tRNA(Glu) + L-glutamate + ATP = L-glutamyl-tRNA(Glu) + AMP + diphosphate. Functionally, catalyzes the attachment of glutamate to tRNA(Glu) in a two-step reaction: glutamate is first activated by ATP to form Glu-AMP and then transferred to the acceptor end of tRNA(Glu). The chain is Glutamate--tRNA ligase from Cupriavidus pinatubonensis (strain JMP 134 / LMG 1197) (Cupriavidus necator (strain JMP 134)).